We begin with the raw amino-acid sequence, 141 residues long: ATP synthase epsilon chain (141 aa).

Belongs to the ATPase epsilon chain family. In terms of assembly, F-type ATPases have 2 components, CF(1) - the catalytic core - and CF(0) - the membrane proton channel. CF(1) has five subunits: alpha(3), beta(3), gamma(1), delta(1), epsilon(1). CF(0) has three main subunits: a, b and c.

It is found in the cell inner membrane. Its function is as follows. Produces ATP from ADP in the presence of a proton gradient across the membrane. The protein is ATP synthase epsilon chain of Thioalkalivibrio sulfidiphilus (strain HL-EbGR7).